The chain runs to 427 residues: Glutamate-1-semialdehyde 2,1-aminomutase (427 aa).

Lysine 265 is modified (N6-(pyridoxal phosphate)lysine).

This sequence belongs to the class-III pyridoxal-phosphate-dependent aminotransferase family. HemL subfamily. Homodimer. Pyridoxal 5'-phosphate serves as cofactor.

The protein localises to the cytoplasm. The enzyme catalyses (S)-4-amino-5-oxopentanoate = 5-aminolevulinate. Its pathway is porphyrin-containing compound metabolism; protoporphyrin-IX biosynthesis; 5-aminolevulinate from L-glutamyl-tRNA(Glu): step 2/2. The protein is Glutamate-1-semialdehyde 2,1-aminomutase of Burkholderia mallei (strain NCTC 10229).